Consider the following 150-residue polypeptide: uncharacterized protein (150 aa).

A signal peptide spans 1 to 23 (MYSILIACLVLLLCLIIYVGHRA).

It belongs to the asfivirus EP152R family.

The protein resides in the virion. This is an uncharacterized protein from African swine fever virus (isolate Tick/South Africa/Pretoriuskop Pr4/1996) (ASFV).